Here is a 348-residue protein sequence, read N- to C-terminus: MNPYVLMILLSSLGLGTTLTFASSHWLLAWMGLEINTLAITPLMAQHHHPRAVEATTKYFLTQATAAAMILFASTTNAWMTGEWSITDLSDPLANTMFMTALALKIGLAPMHFWMPEVLQGLDLLTGLILSTWQKLAPFALIIQTAQNIDPLLLTLLGVTSTLVGGWGGLNQTQLRKILAYSSIAHMGWMIIVIQYAPQLTLLALGTYIIMTSAAFLTLKMSLTTKVSTLATTWSKSPILTATTALVLLSLGGLPPLTGFMPKWLILQELTKQDLPIIATTMALAALISLYFYLRLCYAMTLTISPNTTNSTTPWRTQTTQASMPLALFTMATLGLLPMTPAILTLTT.

Transmembrane regions (helical) follow at residues 3-23 (PYVLMILLSSLGLGTTLTFAS), 60-80 (FLTQATAAAMILFASTTNAWM), 96-116 (TMFMTALALKIGLAPMHFWMP), 149-169 (IDPLLLTLLGVTSTLVGGWGG), 178-197 (ILAYSSIAHMGWMIIVIQYA), 202-219 (LLALGTYIIMTSAAFLTL), 246-266 (LVLLSLGGLPPLTGFMPKWLI), 274-294 (DLPIIATTMALAALISLYFYL), and 326-346 (LALFTMATLGLLPMTPAILTL).

The protein belongs to the complex I subunit 2 family.

It is found in the mitochondrion inner membrane. The enzyme catalyses a ubiquinone + NADH + 5 H(+)(in) = a ubiquinol + NAD(+) + 4 H(+)(out). Core subunit of the mitochondrial membrane respiratory chain NADH dehydrogenase (Complex I) that is believed to belong to the minimal assembly required for catalysis. Complex I functions in the transfer of electrons from NADH to the respiratory chain. The immediate electron acceptor for the enzyme is believed to be ubiquinone. The sequence is that of NADH-ubiquinone oxidoreductase chain 2 (MT-ND2) from Carassius auratus (Goldfish).